Here is a 393-residue protein sequence, read N- to C-terminus: uncharacterized protein (393 aa).

The segment at 6-47 (KYDNKCAIHKEHKIKMICATCKDVVCNECILLDHNGHKFGRI) adopts a B box-type zinc-finger fold. 4 residues coordinate Zn(2+): C11, H14, C34, and H39.

This is an uncharacterized protein from Dictyostelium discoideum (Social amoeba).